A 976-amino-acid chain; its full sequence is Metabotropic glutamate receptor (976 aa).

The first 25 residues, 1–25 (MKQKNNNGTILVVVMVLSWSRVVDL), serve as a signal peptide directing secretion. Over 26–626 (KSPSNTHTQD…IQYMKWNSLF (601 aa)) the chain is Extracellular. N-linked (GlcNAc...) asparagine glycans are attached at residues Asn112 and Asn143. Residues Ser158 and 179 to 181 (AST) each bind L-glutamate. Residue Asn216 is glycosylated (N-linked (GlcNAc...) asparagine). An L-glutamate-binding site is contributed by Tyr229. Residue Asn299 is glycosylated (N-linked (GlcNAc...) asparagine). Residue Asp310 participates in L-glutamate binding. Asn386 carries an N-linked (GlcNAc...) asparagine glycan. L-glutamate is bound at residue Lys417. 2 N-linked (GlcNAc...) asparagine glycosylation sites follow: Asn491 and Asn524. Residues 627-649 (ALIPMAIAIFGIALTSIVIVLFA) traverse the membrane as a helical segment. Residues 650–663 (KNHDTPLVRASGRE) are Cytoplasmic-facing. Residues 664-684 (LSYTLLFGILVCYCNTFALIA) form a helical membrane-spanning segment. At 685-695 (KPTIGSCVLQR) the chain is on the extracellular side. The chain crosses the membrane as a helical span at residues 696 to 714 (FGIGVGFSIIYSALLTKTN). Residues 715–738 (RISRIFHSASKSAQRLKYISPQSQ) are Cytoplasmic-facing. A helical transmembrane segment spans residues 739–759 (VVITTSLIAIQVLITMIWMVV). At 760 to 782 (EPPGTRFYYPDRREVILKCKIQD) the chain is on the extracellular side. The helical transmembrane segment at 783 to 804 (MSFLFSQLYNMILITICTIYAI) threads the bilayer. Residues 805–817 (KTRKIPENFNESK) lie on the Cytoplasmic side of the membrane. A helical transmembrane segment spans residues 818-840 (FIGFTMYTTCIIWLAFVPIYFGT). Topologically, residues 841–850 (GNSYEVQTTT) are extracellular. A helical transmembrane segment spans residues 851-876 (LCISISLSASVALVCLYSPKVYILVF). Residues 877–976 (HPDKNVRKLT…VEPICHIVNK (100 aa)) lie on the Cytoplasmic side of the membrane. The tract at residues 920–946 (LTGGAVGTNASSSTLPTQNSPHLDEAS) is disordered. The segment covering 927–946 (TNASSSTLPTQNSPHLDEAS) has biased composition (polar residues).

The protein belongs to the G-protein coupled receptor 3 family. Expressed in the neurons of the larval CNS from the beginning of the first until the third instar. Expression in the third-instar larval CNS is restricted to a discrete number of somas and projections in the brain lobes and in the ventral ganglion. In the ventral nerve cord, expression is detected both in somas and projections. Expressed in the antennal lobes, the optic lobes, the central complex and the median bundle in the adult CNS.

Its subcellular location is the cell membrane. In terms of biological role, G-protein coupled receptor for glutamate. Ligand binding causes a conformation change that triggers signaling via guanine nucleotide-binding proteins (G proteins) and modulates the activity of down-stream effectors. This chain is Metabotropic glutamate receptor (mGluR), found in Drosophila melanogaster (Fruit fly).